The following is a 148-amino-acid chain: Large ribosomal subunit protein bL9 (148 aa).

It belongs to the bacterial ribosomal protein bL9 family.

Its function is as follows. Binds to the 23S rRNA. In Aeromonas salmonicida (strain A449), this protein is Large ribosomal subunit protein bL9.